The primary structure comprises 336 residues: uncharacterized protein (336 aa).

This is an uncharacterized protein from Enterobacteria phage T4 (Bacteriophage T4).